The sequence spans 223 residues: 3,4-dihydroxy-2-butanone 4-phosphate synthase (223 aa).

Residues R47–E48, D52, R160–T164, and E184 each bind D-ribulose 5-phosphate. E48 contacts Mg(2+). H163 lines the Mg(2+) pocket.

Belongs to the DHBP synthase family. In terms of assembly, homodimer. Mg(2+) is required as a cofactor. Mn(2+) serves as cofactor.

The catalysed reaction is D-ribulose 5-phosphate = (2S)-2-hydroxy-3-oxobutyl phosphate + formate + H(+). The protein operates within cofactor biosynthesis; riboflavin biosynthesis; 2-hydroxy-3-oxobutyl phosphate from D-ribulose 5-phosphate: step 1/1. Functionally, catalyzes the conversion of D-ribulose 5-phosphate to formate and 3,4-dihydroxy-2-butanone 4-phosphate. This is 3,4-dihydroxy-2-butanone 4-phosphate synthase from Cupriavidus pinatubonensis (strain JMP 134 / LMG 1197) (Cupriavidus necator (strain JMP 134)).